Reading from the N-terminus, the 873-residue chain is Outer membrane usher protein FimC (873 aa).

Residues 1–15 (MKQIPLILAMSLAFA) form the signal peptide. Cysteines 815 and 838 form a disulfide.

This sequence belongs to the fimbrial export usher family.

Its subcellular location is the cell outer membrane. In terms of biological role, probable porin-like protein necessary for the assembly of a pilin-type protein. The polypeptide is Outer membrane usher protein FimC (fimC) (Bordetella pertussis (strain Tohama I / ATCC BAA-589 / NCTC 13251)).